The primary structure comprises 213 residues: Octanoyltransferase (213 aa).

Residues 32–207 form the BPL/LPL catalytic domain; that stretch reads NSTLDEIWLV…NILALLNNPD (176 aa). Substrate is bound by residues 71–78, 138–140, and 151–153; these read RGGQVTYH, SLG, and GLA. Residue cysteine 169 is the Acyl-thioester intermediate of the active site.

Belongs to the LipB family.

It is found in the cytoplasm. It carries out the reaction octanoyl-[ACP] + L-lysyl-[protein] = N(6)-octanoyl-L-lysyl-[protein] + holo-[ACP] + H(+). Its pathway is protein modification; protein lipoylation via endogenous pathway; protein N(6)-(lipoyl)lysine from octanoyl-[acyl-carrier-protein]: step 1/2. Its function is as follows. Catalyzes the transfer of endogenously produced octanoic acid from octanoyl-acyl-carrier-protein onto the lipoyl domains of lipoate-dependent enzymes. Lipoyl-ACP can also act as a substrate although octanoyl-ACP is likely to be the physiological substrate. This chain is Octanoyltransferase, found in Shigella flexneri serotype 5b (strain 8401).